The primary structure comprises 116 residues: Protein SPIRAL1-like 1 (116 aa).

The span at 1–12 (MSRGGSAGGGQS) shows a compositional bias: gly residues. Residues 1-116 (MSRGGSAGGG…SSLGYLFGGN (116 aa)) are disordered. Residues 27–43 (AAKPAPAAAPAPAPAPA) are compositionally biased toward pro residues. Over residues 44 to 60 (PAAAVAAPAEKPSPAKA) the composition is skewed to low complexity. Over residues 72–90 (GSRSNNNYHRADGQNTGNF) the composition is skewed to polar residues. Positions 103–116 (PGGGSSLGYLFGGN) are enriched in gly residues.

It belongs to the SPIRAL1 family.

Functionally, acts in maintaining the cortical microtubules organization essential for anisotropic cell growth. This is Protein SPIRAL1-like 1 from Oryza sativa subsp. japonica (Rice).